A 418-amino-acid polypeptide reads, in one-letter code: Actin-related protein 3-B (418 aa).

Belongs to the actin family. ARP3 subfamily. Component of the Arp2/3 complex composed of actr2/arp2, actr3/arp3, arpc1 (arpc1a or arpc1b), arpc2, arpc3, arpc4 and arpc5.

It is found in the cytoplasm. The protein resides in the cytoskeleton. It localises to the cell projection. Its subcellular location is the nucleus. ATP-binding component of the Arp2/3 complex, a multiprotein complex that mediates actin polymerization upon stimulation by nucleation-promoting factor (NPF). The Arp2/3 complex mediates the formation of branched actin networks in the cytoplasm, providing the force for cell motility. Seems to contact the pointed end of the daughter actin filament. In addition to its role in the cytoplasmic cytoskeleton, the Arp2/3 complex also promotes actin polymerization in the nucleus, thereby regulating gene transcription and repair of damaged DNA. The Arp2/3 complex promotes homologous recombination (HR) repair in response to DNA damage by promoting nuclear actin polymerization, leading to drive motility of double-strand breaks (DSBs). The polypeptide is Actin-related protein 3-B (actr3-b) (Xenopus laevis (African clawed frog)).